Here is a 475-residue protein sequence, read N- to C-terminus: Ribulose bisphosphate carboxylase large chain (475 aa).

The propeptide occupies M1–S2. Residue P3 is modified to N-acetylproline. Residue K14 is modified to N6,N6,N6-trimethyllysine. Residues N123 and T173 each coordinate substrate. K175 serves as the catalytic Proton acceptor. K177 contributes to the substrate binding site. 3 residues coordinate Mg(2+): K201, D203, and E204. The residue at position 201 (K201) is an N6-carboxylysine. The Proton acceptor role is filled by H294. Residues R295, H327, and S379 each coordinate substrate.

Belongs to the RuBisCO large chain family. Type I subfamily. Heterohexadecamer of 8 large chains and 8 small chains; disulfide-linked. The disulfide link is formed within the large subunit homodimers. Mg(2+) serves as cofactor. In terms of processing, the disulfide bond which can form in the large chain dimeric partners within the hexadecamer appears to be associated with oxidative stress and protein turnover.

It localises to the plastid. The protein localises to the chloroplast. It catalyses the reaction 2 (2R)-3-phosphoglycerate + 2 H(+) = D-ribulose 1,5-bisphosphate + CO2 + H2O. It carries out the reaction D-ribulose 1,5-bisphosphate + O2 = 2-phosphoglycolate + (2R)-3-phosphoglycerate + 2 H(+). In terms of biological role, ruBisCO catalyzes two reactions: the carboxylation of D-ribulose 1,5-bisphosphate, the primary event in carbon dioxide fixation, as well as the oxidative fragmentation of the pentose substrate in the photorespiration process. Both reactions occur simultaneously and in competition at the same active site. The protein is Ribulose bisphosphate carboxylase large chain of Amborella trichopoda.